We begin with the raw amino-acid sequence, 445 residues long: Phosphoglucosamine mutase (445 aa).

Residue S99 is the Phosphoserine intermediate of the active site. The Mg(2+) site is built by S99, D242, D244, and D246. S99 carries the post-translational modification Phosphoserine.

It belongs to the phosphohexose mutase family. It depends on Mg(2+) as a cofactor. Activated by phosphorylation.

The catalysed reaction is alpha-D-glucosamine 1-phosphate = D-glucosamine 6-phosphate. Its function is as follows. Catalyzes the conversion of glucosamine-6-phosphate to glucosamine-1-phosphate. The polypeptide is Phosphoglucosamine mutase (Campylobacter lari (strain RM2100 / D67 / ATCC BAA-1060)).